The primary structure comprises 863 residues: Oleate activated transcription factor 3 (863 aa).

The segment at residues 18–47 (VCTNCKKRKSKCDRTKPCGTCVRLGDVDSC) is a DNA-binding region (zn(2)-C6 fungal-type). The span at 52–63 (DSSGQPESSPSL) shows a compositional bias: polar residues. Residues 52–99 (DSSGQPESSPSLNDADPLRKQSTPAERISPGFIKKRRSSQTRQDEDHW) form a disordered region.

This sequence belongs to the OAF3 family.

Its subcellular location is the cytoplasm. It is found in the nucleus. The protein resides in the mitochondrion. In terms of biological role, transcriptional inhibitor with a significantly increased number of target genes in response to oleate. This is Oleate activated transcription factor 3 (OAF3) from Saccharomyces cerevisiae (strain ATCC 204508 / S288c) (Baker's yeast).